Here is a 603-residue protein sequence, read N- to C-terminus: Myotubularin (603 aa).

The span at 1–13 (MASASTSKYNSHS) shows a compositional bias: polar residues. The disordered stretch occupies residues 1 to 25 (MASASTSKYNSHSLENESIKRTSRD). Residues Ser13 and Ser18 each carry the phosphoserine modification. Residues 14 to 25 (LENESIKRTSRD) are compositionally biased toward basic and acidic residues. The 69-residue stretch at 29–97 (RDLTEAVPRL…GVISRIEKMG (69 aa)) folds into the GRAM domain. A Myotubularin phosphatase domain is found at 163–538 (GWTVYNPVEE…RHLELWVNYY (376 aa)). Residues Asn288, Asn313, and Ile314 each coordinate a 1,2-diacyl-sn-glycero-3-phospho-(1D-myo-inositol-3,5-bisphosphate). 3 residues coordinate a 1,2-diacyl-sn-glycero-3-phospho-(1D-myo-inositol-3-phosphate): Asn288, Asn313, and Ile314. Cys375 serves as the catalytic Phosphocysteine intermediate. Residues Ser376, Asp377, Gly378, Trp379, Asp380, Arg381, Lys417, and Arg421 each coordinate a 1,2-diacyl-sn-glycero-3-phospho-(1D-myo-inositol-3,5-bisphosphate). 6 residues coordinate a 1,2-diacyl-sn-glycero-3-phospho-(1D-myo-inositol-3-phosphate): Ser376, Asp377, Gly378, Trp379, Asp380, and Arg381. Arg421 serves as a coordination point for a 1,2-diacyl-sn-glycero-3-phospho-(1D-myo-inositol-3-phosphate). Thr495 carries the post-translational modification Phosphothreonine. The interval 579 to 603 (SAKLSDPPTSPSSPSQMMPHVQTHF) is disordered. Residue Ser588 is modified to Phosphoserine.

This sequence belongs to the protein-tyrosine phosphatase family. Non-receptor class myotubularin subfamily. Heterodimer with MTMR12. Interacts with KMT2A/MLL1 (via SET domain). Interacts with DES in skeletal muscle but not in cardiac muscle. Interacts with SPEG.

Its subcellular location is the cytoplasm. The protein localises to the cell membrane. The protein resides in the cell projection. It localises to the filopodium. It is found in the ruffle. Its subcellular location is the late endosome. The protein localises to the myofibril. The protein resides in the sarcomere. The enzyme catalyses a 1,2-diacyl-sn-glycero-3-phospho-(1D-myo-inositol-3-phosphate) + H2O = a 1,2-diacyl-sn-glycero-3-phospho-(1D-myo-inositol) + phosphate. It catalyses the reaction a 1,2-diacyl-sn-glycero-3-phospho-(1D-myo-inositol-3,5-bisphosphate) + H2O = a 1,2-diacyl-sn-glycero-3-phospho-(1D-myo-inositol-5-phosphate) + phosphate. It carries out the reaction 1,2-dioctanoyl-sn-glycero-3-phospho-(1-D-myo-inositol-3-phosphate) + H2O = 1,2-dioctanoyl-sn-glycero-3-phospho-(1D-myo-inositol) + phosphate. The catalysed reaction is 1,2-dioctanoyl-sn-glycero-3-phospho-(1D-myo-inositol-3,5-bisphosphate) + H2O = 1,2-dioctanoyl-sn-glycero-3-phospho-(1D-myo-inositol-5-phosphate) + phosphate. The enzyme catalyses 1,2-dihexadecanoyl-sn-glycero-3-phospho-(1D-myo-inositol-3,5-phosphate) + H2O = 1,2-dihexadecanoyl-sn-glycero-3-phospho-(1D-myo-inositol-5-phosphate) + phosphate. Its activity is regulated as follows. Allosterically activated by phosphatidylinositol 5-phosphate (PI5P). Functionally, lipid phosphatase which dephosphorylates phosphatidylinositol 3-monophosphate (PI3P) and phosphatidylinositol 3,5-bisphosphate (PI(3,5)P2). Has also been shown to dephosphorylate phosphotyrosine- and phosphoserine-containing peptides. Negatively regulates EGFR degradation through regulation of EGFR trafficking from the late endosome to the lysosome. Plays a role in vacuolar formation and morphology. Regulates desmin intermediate filament assembly and architecture. Plays a role in mitochondrial morphology and positioning. Required for skeletal muscle maintenance but not for myogenesis. In skeletal muscles, stabilizes MTMR12 protein levels. The protein is Myotubularin of Homo sapiens (Human).